The sequence spans 250 residues: Thiamine thiazole synthase (250 aa).

NAD(+) is bound by residues Ser36, Glu55–Glu56, Gly63, Val126, and His152–Asp154. 2 residues coordinate Fe cation: Asp154 and His169. Met216 serves as a coordination point for NAD(+). Residue Arg226 coordinates glycine.

Belongs to the THI4 family. Homooctamer; tetramer of dimers. Fe(2+) is required as a cofactor.

The enzyme catalyses hydrogen sulfide + glycine + NAD(+) = ADP-5-ethyl-4-methylthiazole-2-carboxylate + nicotinamide + 3 H2O + H(+). It participates in cofactor biosynthesis; thiamine diphosphate biosynthesis. Functionally, involved in the biosynthesis of the thiazole moiety of thiamine. Catalyzes the conversion of NAD and glycine to adenosine diphosphate 5-(2-hydroxyethyl)-4-methylthiazole-2-carboxylate (ADT), an adenylated thiazole intermediate, using free sulfide as a source of sulfur. The sequence is that of Thiamine thiazole synthase from Thermotoga maritima (strain ATCC 43589 / DSM 3109 / JCM 10099 / NBRC 100826 / MSB8).